The following is a 489-amino-acid chain: Pluviatolide synthase (489 aa).

The chain crosses the membrane as a helical span at residues 6–26; it reads SVLAMSSTLILALAMALIFLF. A heme-binding site is contributed by Cys432.

Belongs to the cytochrome P450 family. The cofactor is heme. In terms of tissue distribution, expressed in leaves, rhizomes and stems.

It is found in the membrane. The catalysed reaction is (-)-matairesinol + reduced [NADPH--hemoprotein reductase] + O2 = (-)-pluviatolide + oxidized [NADPH--hemoprotein reductase] + 2 H2O + H(+). The protein operates within aromatic compound metabolism; phenylpropanoid biosynthesis. Cytochrome P450 involved in the biosynthesis of etoposide, a chemotherapeutic compound of the topoisomerase inhibitor family. Catalyzes the conversion of matairesinol to pluviatolide. The protein is Pluviatolide synthase of Sinopodophyllum hexandrum (Himalayan may apple).